A 360-amino-acid polypeptide reads, in one-letter code: Peptide chain release factor 1 (360 aa).

An N5-methylglutamine modification is found at Q235. Residues 284-293 are compositionally biased toward basic and acidic residues; the sequence is ARRQQEESST. Positions 284–314 are disordered; it reads ARRQQEESSTRRNLLGSGDRSDRNRTYNFPQ.

Belongs to the prokaryotic/mitochondrial release factor family. Post-translationally, methylated by PrmC. Methylation increases the termination efficiency of RF1.

It localises to the cytoplasm. Peptide chain release factor 1 directs the termination of translation in response to the peptide chain termination codons UAG and UAA. In Erwinia tasmaniensis (strain DSM 17950 / CFBP 7177 / CIP 109463 / NCPPB 4357 / Et1/99), this protein is Peptide chain release factor 1.